The following is a 184-amino-acid chain: Ribosome-recycling factor (184 aa).

Residues 133–162 (RDGMDNLKQDENKKEISEDERKRHETEVQK) are compositionally biased toward basic and acidic residues. The interval 133–163 (RDGMDNLKQDENKKEISEDERKRHETEVQKL) is disordered.

The protein belongs to the RRF family.

The protein resides in the cytoplasm. Its function is as follows. Responsible for the release of ribosomes from messenger RNA at the termination of protein biosynthesis. May increase the efficiency of translation by recycling ribosomes from one round of translation to another. The protein is Ribosome-recycling factor of Sphingopyxis alaskensis (strain DSM 13593 / LMG 18877 / RB2256) (Sphingomonas alaskensis).